Consider the following 878-residue polypeptide: MLTGKEIREKYLRFFEQRGHQILPSASLIPHNDPSILWTAAGMVPFKPFFTGQAVPEYQRVTTCQKCIRTPDIESVGRTARHHTFFEMLGNFSFGDYFKESIIPWAWEFITKELNLPKEKLWITIYQDDDEAFEIWNKVVGIPSERIVRLGKDTNFWEIGVGPCGPCSEIYVDLGEARGCGSPECQVGCDCDRFLEIWNLVFIQFFRDEEGNYSPLENKGIDTGMGLERVASVLQGVASNFDTDIFREIMDFTANLAGQEYGQKADIDLALKVIADHCRAVTFAVSDGALPGNEGRGYVIRRLLRRAVRFGRVLGVREPFLYKVAQAVIKQMQDAYPELKQKAEHVLRVIRTEEERFLETLAAGSDILSALINEAKASGASEITGDDAFKLYDTFGFPLELTQEIAEEQGLAVDVEVFNAAMEEQRKRARSARQETEYLSERGVLYKALREELGETRFIGYSALEADSNIMALLKDGMQEISAVAGEEVEIVLDVTPCYAESGGQVADHAILRGPDLEVEITSVNKPVEGLVIHRGKVLSGIIKRHDSVKAIVDQPRRQDTARNHSATHLLHKALKEVLGDHVNQAGSLVEPDRLRFDFTHYAAVTSEELRRIEEIVNEAVLSNLSIEVFETSLSKAKEMGAAALFGEKYGKQVRVVKMGDFSMELCGGTHLTSTAEVGLFKIFNETSVGAGLRRIEAVTGTGVLKYLKAKEEQLEEIASVIKSPMHELVRRSEALVQQNKSLEQEIEALRNKLAKSEVQDILGNIKRAKEVPVLASVVAAPDMDNLRGMVDMLRDKMGSGVILLGSTAGEKVNLVAAVTKDLHGQGLHAGNLVKEIAKMVGGGGGGRPDMAQAGGKNPEKLQEAIDQVCRVVEGQIK.

4 residues coordinate Zn(2+): His-565, His-569, Cys-667, and His-671.

The protein belongs to the class-II aminoacyl-tRNA synthetase family. Zn(2+) serves as cofactor.

The protein resides in the cytoplasm. The catalysed reaction is tRNA(Ala) + L-alanine + ATP = L-alanyl-tRNA(Ala) + AMP + diphosphate. Catalyzes the attachment of alanine to tRNA(Ala) in a two-step reaction: alanine is first activated by ATP to form Ala-AMP and then transferred to the acceptor end of tRNA(Ala). Also edits incorrectly charged Ser-tRNA(Ala) and Gly-tRNA(Ala) via its editing domain. The protein is Alanine--tRNA ligase of Desulforamulus reducens (strain ATCC BAA-1160 / DSM 100696 / MI-1) (Desulfotomaculum reducens).